Here is a 489-residue protein sequence, read N- to C-terminus: Ketol-acid reductoisomerase (NADP(+)) (489 aa).

The KARI N-terminal Rossmann domain occupies 16–207 (IKKCRFMEKK…GGHRAGVLES (192 aa)). NADP(+)-binding positions include 44–47 (CGSQ), Arg-67, Ser-77, and 107–109 (DKQ). Residue His-131 is part of the active site. Gly-157 lines the NADP(+) pocket. KARI C-terminal knotted domains follow at residues 208–343 (SFVA…QSPD) and 344–483 (YDKK…MKNM). Mg(2+)-binding residues include Asp-216, Glu-220, Glu-388, and Glu-392. Ser-413 serves as a coordination point for substrate.

Belongs to the ketol-acid reductoisomerase family. It depends on Mg(2+) as a cofactor.

It carries out the reaction (2R)-2,3-dihydroxy-3-methylbutanoate + NADP(+) = (2S)-2-acetolactate + NADPH + H(+). It catalyses the reaction (2R,3R)-2,3-dihydroxy-3-methylpentanoate + NADP(+) = (S)-2-ethyl-2-hydroxy-3-oxobutanoate + NADPH + H(+). The protein operates within amino-acid biosynthesis; L-isoleucine biosynthesis; L-isoleucine from 2-oxobutanoate: step 2/4. Its pathway is amino-acid biosynthesis; L-valine biosynthesis; L-valine from pyruvate: step 2/4. Functionally, involved in the biosynthesis of branched-chain amino acids (BCAA). Catalyzes an alkyl-migration followed by a ketol-acid reduction of (S)-2-acetolactate (S2AL) to yield (R)-2,3-dihydroxy-isovalerate. In the isomerase reaction, S2AL is rearranged via a Mg-dependent methyl migration to produce 3-hydroxy-3-methyl-2-ketobutyrate (HMKB). In the reductase reaction, this 2-ketoacid undergoes a metal-dependent reduction by NADPH to yield (R)-2,3-dihydroxy-isovalerate. The protein is Ketol-acid reductoisomerase (NADP(+)) of Buchnera aphidicola subsp. Diuraphis noxia.